A 130-amino-acid chain; its full sequence is Histone H2B (130 aa).

The interval 1–31 (MAKSARHVTGKAPSSLDAHDRKKSKKKSSSM) is disordered. A Glycyl lysine isopeptide (Lys-Gly) (interchain with G-Cter in ubiquitin) cross-link involves residue Lys122.

Belongs to the histone H2B family. The nucleosome is a histone octamer containing two molecules each of H2A, H2B, H3 and H4 assembled in one H3-H4 heterotetramer and two H2A-H2B heterodimers. The octamer wraps approximately 147 bp of DNA. In terms of processing, monoubiquitinated to form H2BK123ub1. H2BK123ub1 gives a specific tag for epigenetic transcriptional activation and is also prerequisite for H3K4me and H3K79me formation.

The protein localises to the nucleus. Its subcellular location is the chromosome. Its function is as follows. Core component of nucleosome. Nucleosomes wrap and compact DNA into chromatin, limiting DNA accessibility to the cellular machineries which require DNA as a template. Histones thereby play a central role in transcription regulation, DNA repair, DNA replication and chromosomal stability. DNA accessibility is regulated via a complex set of post-translational modifications of histones, also called histone code, and nucleosome remodeling. The polypeptide is Histone H2B (HTB1) (Encephalitozoon cuniculi (strain GB-M1) (Microsporidian parasite)).